Reading from the N-terminus, the 159-residue chain is Lipoprotein signal peptidase (159 aa).

Helical transmembrane passes span 4 to 24, 64 to 84, and 88 to 108; these read PYFV…DQVT, MSFF…FYIK, and GNFL…GNFI. Catalysis depends on residues Asp-118 and Asp-136. Residues 131-151 form a helical membrane-spanning segment; the sequence is IFNGADSSLTIGVILVLIALL.

This sequence belongs to the peptidase A8 family.

The protein resides in the cell membrane. The catalysed reaction is Release of signal peptides from bacterial membrane prolipoproteins. Hydrolyzes -Xaa-Yaa-Zaa-|-(S,diacylglyceryl)Cys-, in which Xaa is hydrophobic (preferably Leu), and Yaa (Ala or Ser) and Zaa (Gly or Ala) have small, neutral side chains.. Its pathway is protein modification; lipoprotein biosynthesis (signal peptide cleavage). Its function is as follows. This protein specifically catalyzes the removal of signal peptides from prolipoproteins. This is Lipoprotein signal peptidase from Staphylococcus carnosus (strain TM300).